The following is a 448-amino-acid chain: N-succinylarginine dihydrolase (448 aa).

Substrate-binding positions include 19–28 (AGLSSGNIAS), Asn-110, and 137–138 (HR). Glu-174 is a catalytic residue. Position 216 (Arg-216) interacts with substrate. Residue His-252 is part of the active site. Substrate contacts are provided by Asp-254 and Asn-366. The Nucleophile role is filled by Cys-372.

The protein belongs to the succinylarginine dihydrolase family. As to quaternary structure, homodimer.

The enzyme catalyses N(2)-succinyl-L-arginine + 2 H2O + 2 H(+) = N(2)-succinyl-L-ornithine + 2 NH4(+) + CO2. The protein operates within amino-acid degradation; L-arginine degradation via AST pathway; L-glutamate and succinate from L-arginine: step 2/5. In terms of biological role, catalyzes the hydrolysis of N(2)-succinylarginine into N(2)-succinylornithine, ammonia and CO(2). This chain is N-succinylarginine dihydrolase, found in Legionella pneumophila (strain Corby).